The following is a 435-amino-acid chain: Tyrosine-protein phosphatase non-receptor type 1 (435 aa).

M1 carries the post-translational modification N-acetylmethionine. In terms of domain architecture, Tyrosine-protein phosphatase spans 3–277; that stretch reads MEKEFEQIDK…RFSYLAVIEG (275 aa). A Phosphotyrosine modification is found at Y20. At S50 the chain carries Phosphoserine; by PKB/AKT1, CLK1 and CLK2. Y66 bears the Phosphotyrosine; by EGFR mark. Substrate contacts are provided by residues D181 and 215–221; that span reads CSAGIGR. C215 acts as the Phosphocysteine intermediate in catalysis. At C215 the chain carries Cysteine persulfide; alternate. C215 carries the post-translational modification Cysteine sulfenic acid (-SOH); alternate. Residue C215 is modified to Cysteine sulfinic acid (-SO2H); alternate. S-nitrosocysteine; in reversibly inhibited form is present on C215. The n,N-(cysteine-1,S-diyl)serine (Cys-Ser); in inhibited form cross-link spans 215–216; the sequence is CS. Phosphoserine; by CLK1 and CLK2 is present on residues S242 and S243. Q262 contributes to the substrate binding site. A compositionally biased stretch (basic and acidic residues) spans 338–351; the sequence is TQEDKDCPIKEEKG. The tract at residues 338–359 is disordered; the sequence is TQEDKDCPIKEEKGSPLNAAPY. A phosphoserine mark is found at S352, S363, and S365. Phosphothreonine is present on T368. A Phosphoserine; by PKC modification is found at S378. Positions 378 to 398 are disordered; the sequence is SLRGAQAASPAKGEPSLPEKD. S386 is subject to Phosphoserine; by CDK1.

The protein belongs to the protein-tyrosine phosphatase family. Non-receptor class 1 subfamily. Interacts with EPHA3 (phosphorylated); dephosphorylates EPHA3 and may regulate its trafficking and function. Interacts with MET. Interacts with NCK1. Oxidized on Cys-215; the Cys-SOH formed in response to redox signaling reacts with the alpha-amido of the following residue to form a sulfenamide cross-link, triggering a conformational change that inhibits substrate binding and activity. The active site can be restored by reduction. In terms of processing, ser-50 is the major site of phosphorylation as compared to Ser-242 and Ser-243. Activated by phosphorylation at Ser-50. Post-translationally, S-nitrosylation of Cys-215 inactivates the enzyme activity. Sulfhydration at Cys-215 following endoplasmic reticulum stress inactivates the enzyme activity, promoting EIF2AK3/PERK activity. In terms of tissue distribution, expressed in keratinocytes (at protein level).

Its subcellular location is the endoplasmic reticulum membrane. The catalysed reaction is O-phospho-L-tyrosyl-[protein] + H2O = L-tyrosyl-[protein] + phosphate. Tyrosine-protein phosphatase which acts as a regulator of endoplasmic reticulum unfolded protein response. Mediates dephosphorylation of EIF2AK3/PERK; inactivating the protein kinase activity of EIF2AK3/PERK. May play an important role in CKII- and p60c-src-induced signal transduction cascades. May regulate the EFNA5-EPHA3 signaling pathway which modulates cell reorganization and cell-cell repulsion. May also regulate the hepatocyte growth factor receptor signaling pathway through dephosphorylation of MET. In Homo sapiens (Human), this protein is Tyrosine-protein phosphatase non-receptor type 1 (PTPN1).